A 334-amino-acid polypeptide reads, in one-letter code: DNA polymerase beta (334 aa).

Residues Lys-60, Leu-62, and Val-65 each coordinate K(+). 3 residues coordinate Na(+): Lys-60, Leu-62, and Val-65. Residue Lys-72 is the Nucleophile; Schiff-base intermediate with DNA; for 5'-dRP lyase activity of the active site. Arg-83 is subject to Omega-N-methylarginine; by PRMT6. Residues Thr-101, Val-103, and Ile-106 each coordinate K(+). The Na(+) site is built by Thr-101, Val-103, and Ile-106. An a 2'-deoxyribonucleoside 5'-triphosphate-binding site is contributed by Arg-149. Arg-152 carries the omega-N-methylarginine; by PRMT6 modification. Residues Ser-180, Arg-183, Gly-189, and Asp-190 each contribute to the a 2'-deoxyribonucleoside 5'-triphosphate site. A DNA-binding region spans residues 183–192 (RGAESSGDMD). The Mg(2+) site is built by Asp-190, Asp-192, and Asp-255.

This sequence belongs to the DNA polymerase type-X family. As to quaternary structure, monomer. Mg(2+) is required as a cofactor. In terms of processing, methylation by PRMT6 stimulates the polymerase activity by enhancing DNA binding and processivity. Ubiquitinated: monoubiquitinated by huwe1/arf-bp1. Monoubiquitinated protein is then the target of stub1/chip, which catalyzes polyubiquitination from monoubiquitin, leading to degradation by the proteasome. usp47 mediates the deubiquitination of monoubiquitinated protein, preventing polyubiquitination by STUB1/CHIP and its subsequent degradation.

It localises to the nucleus. The protein localises to the cytoplasm. The enzyme catalyses DNA(n) + a 2'-deoxyribonucleoside 5'-triphosphate = DNA(n+1) + diphosphate. It catalyses the reaction a 5'-end 2'-deoxyribose-2'-deoxyribonucleotide-DNA = (2E,4S)-4-hydroxypenten-2-al-5-phosphate + a 5'-end 5'-phospho-2'-deoxyribonucleoside-DNA + H(+). The catalysed reaction is 2'-deoxyribonucleotide-(2'-deoxyribose 5'-phosphate)-2'-deoxyribonucleotide-DNA = a 3'-end 2'-deoxyribonucleotide-(2,3-dehydro-2,3-deoxyribose 5'-phosphate)-DNA + a 5'-end 5'-phospho-2'-deoxyribonucleoside-DNA + H(+). Repair polymerase that plays a key role in base-excision repair. During this process, the damaged base is excised by specific DNA glycosylases, the DNA backbone is nicked at the abasic site by an apurinic/apyrimidic (AP) endonuclease, and POLB removes 5'-deoxyribose-phosphate from the preincised AP site acting as a 5'-deoxyribose-phosphate lyase (5'-dRP lyase); through its DNA polymerase activity, it adds one nucleotide to the 3' end of the arising single-nucleotide gap. Conducts 'gap-filling' DNA synthesis in a stepwise distributive fashion rather than in a processive fashion as for other DNA polymerases. It is also able to cleave sugar-phosphate bonds 3' to an intact AP site, acting as an AP lyase. The chain is DNA polymerase beta (polb) from Xenopus laevis (African clawed frog).